We begin with the raw amino-acid sequence, 283 residues long: Mitochondrial outer membrane protein porin (283 aa).

This sequence belongs to the eukaryotic mitochondrial porin family.

It localises to the mitochondrion outer membrane. In terms of biological role, forms a channel through the cell membrane that allows diffusion of small hydrophilic molecules. The channel adopts an open conformation at low or zero membrane potential and a closed conformation at potentials above 30-40 mV. The open state has a weak anion selectivity whereas the closed state is cation-selective. In Neurospora crassa (strain ATCC 24698 / 74-OR23-1A / CBS 708.71 / DSM 1257 / FGSC 987), this protein is Mitochondrial outer membrane protein porin.